The following is a 466-amino-acid chain: Ribulose bisphosphate carboxylase large chain (466 aa).

N6,N6,N6-trimethyllysine is present on Lys5. Asn114 and Thr164 together coordinate substrate. Lys166 (proton acceptor) is an active-site residue. Lys168 provides a ligand contact to substrate. Residues Lys192, Asp194, and Glu195 each contribute to the Mg(2+) site. Lys192 carries the post-translational modification N6-carboxylysine. Residue His285 is the Proton acceptor of the active site. Arg286, His318, and Ser370 together coordinate substrate.

This sequence belongs to the RuBisCO large chain family. Type I subfamily. Heterohexadecamer of 8 large chains and 8 small chains; disulfide-linked. The disulfide link is formed within the large subunit homodimers. Mg(2+) serves as cofactor. In terms of processing, the disulfide bond which can form in the large chain dimeric partners within the hexadecamer appears to be associated with oxidative stress and protein turnover.

It is found in the plastid. Its subcellular location is the chloroplast. The catalysed reaction is 2 (2R)-3-phosphoglycerate + 2 H(+) = D-ribulose 1,5-bisphosphate + CO2 + H2O. It catalyses the reaction D-ribulose 1,5-bisphosphate + O2 = 2-phosphoglycolate + (2R)-3-phosphoglycerate + 2 H(+). Functionally, ruBisCO catalyzes two reactions: the carboxylation of D-ribulose 1,5-bisphosphate, the primary event in carbon dioxide fixation, as well as the oxidative fragmentation of the pentose substrate in the photorespiration process. Both reactions occur simultaneously and in competition at the same active site. The chain is Ribulose bisphosphate carboxylase large chain from Caltha palustris (Yellow marsh marigold).